Reading from the N-terminus, the 90-residue chain is MARMVQCIKLGREAEGLDFPPLPGELGKKVYENVSKEAWQAWLRHQTMLINENRLNLADSRARQYLTQQLQNYFFGTGADMPAGFVPPSV.

This sequence belongs to the Fe(2+)-trafficking protein family.

Could be a mediator in iron transactions between iron acquisition and iron-requiring processes, such as synthesis and/or repair of Fe-S clusters in biosynthetic enzymes. This Laribacter hongkongensis (strain HLHK9) protein is Probable Fe(2+)-trafficking protein.